The following is a 299-amino-acid chain: Bifunctional protein FolD (299 aa).

Residues 168–170 (GRS), S193, and I234 contribute to the NADP(+) site.

It belongs to the tetrahydrofolate dehydrogenase/cyclohydrolase family. As to quaternary structure, homodimer.

It carries out the reaction (6R)-5,10-methylene-5,6,7,8-tetrahydrofolate + NADP(+) = (6R)-5,10-methenyltetrahydrofolate + NADPH. The catalysed reaction is (6R)-5,10-methenyltetrahydrofolate + H2O = (6R)-10-formyltetrahydrofolate + H(+). Its pathway is one-carbon metabolism; tetrahydrofolate interconversion. In terms of biological role, catalyzes the oxidation of 5,10-methylenetetrahydrofolate to 5,10-methenyltetrahydrofolate and then the hydrolysis of 5,10-methenyltetrahydrofolate to 10-formyltetrahydrofolate. This chain is Bifunctional protein FolD, found in Brucella abortus (strain S19).